We begin with the raw amino-acid sequence, 272 residues long: MARLAAFDMDGTLLMPDHHLGRETIATLARLRERDITLTFATGRHVLEMRHILGTLSLDAYLITGNGTRIHSLEGDVLHRQDLDPQVADTVMHHAWDTRASMHVFNDNGWFTGQEIPALLQAHVYSGFRYQVINIKSIPAHQVTKICFCGDHDDLIRLRIQLNEAMEERAHLCFSAVDCLEVLPLGCNKGSALAVLSNHLGLSLADCMAFGDAMNDREMLGSVGRGLIMGNAMPQLIAALPHLAVIGHCGNQAVSHFLTHWLDNPHLPYSPE.

Aspartate 8 (nucleophile) is an active-site residue. Mg(2+)-binding residues include aspartate 8, aspartate 10, and aspartate 212.

Belongs to the HAD-like hydrolase superfamily. Cof family. The cofactor is Mg(2+).

It catalyses the reaction 4-amino-2-methyl-5-(diphosphooxymethyl)pyrimidine + H2O = 4-amino-2-methyl-5-(phosphooxymethyl)pyrimidine + phosphate + H(+). Functionally, catalyzes the hydrolysis of 4-amino-2-methyl-5-hydroxymethylpyrimidine pyrophosphate (HMP-PP) to 4-amino-2-methyl-5-hydroxymethylpyrimidine phosphate (HMP-P). The polypeptide is HMP-PP phosphatase (Salmonella schwarzengrund (strain CVM19633)).